A 139-amino-acid polypeptide reads, in one-letter code: MLNRTVLVGRLTKDPELRSTPNGVNVGTFTLAVNRTFTNAQGEREADFINVVVFKKQAENVKNYLSKGSLAGVDGRLQTRSYDNKEGRRVFVTEVVADSVQFLEPKNNNKQNNQQHNGQTQTGNNPFDNTEEDFSDLPF.

The SSB domain occupies 1–104 (MLNRTVLVGR…VVADSVQFLE (104 aa)). Residues 103–139 (LEPKNNNKQNNQQHNGQTQTGNNPFDNTEEDFSDLPF) form a disordered region. Residues 106–125 (KNNNKQNNQQHNGQTQTGNN) are compositionally biased toward low complexity. The segment covering 129–139 (NTEEDFSDLPF) has biased composition (acidic residues).

Homotetramer.

This is Single-stranded DNA-binding protein 2 (ssb-p) from Staphylococcus aureus (strain COL).